The chain runs to 132 residues: Small ribosomal subunit protein uS11 (132 aa).

The protein belongs to the universal ribosomal protein uS11 family. Part of the 30S ribosomal subunit. Interacts with proteins S7 and S18. Binds to IF-3.

In terms of biological role, located on the platform of the 30S subunit, it bridges several disparate RNA helices of the 16S rRNA. Forms part of the Shine-Dalgarno cleft in the 70S ribosome. The sequence is that of Small ribosomal subunit protein uS11 from Cyanothece sp. (strain PCC 7425 / ATCC 29141).